The sequence spans 506 residues: Probable alpha-L-arabinofuranosidase B (506 aa).

The signal sequence occupies residues 1-26 (MSSGLSLERACAVALGIVASASLVAA). A catalytic region spans residues 27-343 (GPCDIYSSGG…ADIVAAKYAI (317 aa)). Cystine bridges form between cysteine 29-cysteine 39, cysteine 89-cysteine 94, and cysteine 184-cysteine 185. N-linked (GlcNAc...) asparagine glycosylation is present at asparagine 91. Aspartate 227 contacts substrate. Catalysis depends on glutamate 229, which acts as the Nucleophile. Residues asparagine 230 and glycine 304 each contribute to the substrate site. Aspartate 305 acts as the Proton donor in catalysis. An ABD region spans residues 344–506 (ASLTSGPALT…VSWVVSTGFA (163 aa)). A disulfide bridge connects residues cysteine 409 and cysteine 447. The substrate site is built by histidine 424, asparagine 426, phenylalanine 427, aspartate 443, histidine 471, glutamate 473, leucine 476, and aspartate 496.

This sequence belongs to the glycosyl hydrolase 54 family.

It is found in the secreted. It catalyses the reaction Hydrolysis of terminal non-reducing alpha-L-arabinofuranoside residues in alpha-L-arabinosides.. The protein operates within glycan metabolism; L-arabinan degradation. Alpha-L-arabinofuranosidase involved in the degradation of arabinoxylan, a major component of plant hemicellulose. Able to hydrolyze 1,5-, 1,3- and 1,2-alpha-linkages not only in L-arabinofuranosyl oligosaccharides, but also in polysaccharides containing terminal non-reducing L-arabinofuranoses in side chains, like L-arabinan, arabinogalactan and arabinoxylan. This is Probable alpha-L-arabinofuranosidase B (abfB) from Aspergillus flavus (strain ATCC 200026 / FGSC A1120 / IAM 13836 / NRRL 3357 / JCM 12722 / SRRC 167).